The following is a 279-amino-acid chain: MKRVGAHVSIAGGVENAPLNATAIGAKAFALFTRNQRQWHSPPLQKASVDAFRRHCEAGGFDARHILPHDSYLINLGNPDPDKLERSRKAFIEEMERAETLGLVLLNFHPGSHLNAIGEEECLGLIADSINLAIKATDRVTAVIENTAGQGTNLGSRFEHLRAIIDRIEDRSRIGVCLDTCHLFASGYDLGTAEAAERTFEEFDRTVGMQYLKGMHLNDALRPLGSRLDRHACIGKGMIGIEGFRYIMQSPLFEEIPLILETPDSEGWKEEIELLYSLE.

Residues H69, H109, E145, D179, H182, H216, D229, H231, and E261 each coordinate Zn(2+).

It belongs to the AP endonuclease 2 family. It depends on Zn(2+) as a cofactor.

It carries out the reaction Endonucleolytic cleavage to 5'-phosphooligonucleotide end-products.. Endonuclease IV plays a role in DNA repair. It cleaves phosphodiester bonds at apurinic or apyrimidinic (AP) sites, generating a 3'-hydroxyl group and a 5'-terminal sugar phosphate. The sequence is that of Probable endonuclease 4 from Chlorobium phaeovibrioides (strain DSM 265 / 1930) (Prosthecochloris vibrioformis (strain DSM 265)).